We begin with the raw amino-acid sequence, 414 residues long: Ferredoxin--NAD(P)(+) reductase fdr (414 aa).

D7 to A38 provides a ligand contact to FAD. K149–E177 contributes to the NAD(+) binding site.

It belongs to the FAD-dependent oxidoreductase family. In terms of assembly, monomer. Carbazole 1,9a-dioxygenase complex consists of a terminal oxygenase component CarAa, a ferredoxin reductase component fdr and a ferredoxin component CarAc. It depends on FAD as a cofactor.

It catalyses the reaction 2 reduced [2Fe-2S]-[ferredoxin] + NAD(+) + H(+) = 2 oxidized [2Fe-2S]-[ferredoxin] + NADH. The enzyme catalyses 2 reduced [2Fe-2S]-[ferredoxin] + NADP(+) + H(+) = 2 oxidized [2Fe-2S]-[ferredoxin] + NADPH. Its function is as follows. Part of the multicomponent carbazole 1,9a-dioxygenase (CARDO), that converts carbazole (CAR) into 2-aminobiphenyl-2,3-diol. The protein is Ferredoxin--NAD(P)(+) reductase fdr (fdr) of Sphingomonas sp.